Reading from the N-terminus, the 117-residue chain is uncharacterized protein (117 aa).

Residues 96–117 (RKGGASKHRTLSAETGIRGEGE) form a disordered region.

This is an uncharacterized protein from Saccharomyces cerevisiae (strain ATCC 204508 / S288c) (Baker's yeast).